The sequence spans 240 residues: Intestine-specific homeobox (240 aa).

A disordered region spans residues 36–82; it reads PTERRSLPRPQSICKEDSRQTTIPGSKLERPPQDQPQEEKKNKRRVR. Residues 62–76 are compositionally biased toward basic and acidic residues; that stretch reads KLERPPQDQPQEEKK. Residues 78 to 137 constitute a DNA-binding region (homeobox); that stretch reads KRRVRTTFTTEQLQELEKLFHFTHYPDIHVRSQLASRINLPEARVQIWFQNQRAKWRKQE.

Expressed in intestinal epithelial cells from the duodenum to the proximal colon.

The protein localises to the nucleus. In terms of biological role, transcription factor that regulates gene expression in intestine. May participate in vitamin A metabolism most likely by regulating BCO1 expression in the intestine. The polypeptide is Intestine-specific homeobox (Isx) (Mus musculus (Mouse)).